Consider the following 741-residue polypeptide: Condensin complex subunit 2 (741 aa).

The disordered stretch occupies residues Met-1 to Arg-67. Residues Ser-15, Ser-25, and Ser-28 each carry the phosphoserine modification. A Phosphothreonine modification is found at Thr-49. Ser-70, Ser-78, Ser-81, Ser-87, Ser-89, Ser-92, Ser-96, Ser-201, and Ser-233 each carry phosphoserine. Acidic residues predominate over residues Cys-361–Asp-377. The tract at residues Cys-361–Ala-383 is disordered. Position 432 is a phosphoserine (Ser-432). The tract at residues Phe-447–Lys-467 is disordered. Residue Lys-488 forms a Glycyl lysine isopeptide (Lys-Gly) (interchain with G-Cter in SUMO2) linkage. At Ser-496 the chain carries Phosphoserine. Phosphothreonine is present on residues Thr-598 and Thr-605. At Lys-637 the chain carries N6-acetyllysine.

The protein belongs to the CND2 (condensin subunit 2) family. In terms of assembly, component of the condensin complex, which contains the SMC2 and SMC4 heterodimer, and three non SMC subunits that probably regulate the complex: NCAPH/BRRN1, NCAPD2/CAPD2 and NCAPG. Phosphorylated by CDK1. Its phosphorylation, as well as that of NCAPD2 and NCAPG subunits, activates the condensin complex and is required for chromosome condensation. Widely expressed at low level. Expressed in proliferating cells.

The protein resides in the nucleus. Its subcellular location is the cytoplasm. It is found in the chromosome. Its function is as follows. Regulatory subunit of the condensin complex, a complex required for conversion of interphase chromatin into mitotic-like condense chromosomes. The condensin complex probably introduces positive supercoils into relaxed DNA in the presence of type I topoisomerases and converts nicked DNA into positive knotted forms in the presence of type II topoisomerases. Early in neurogenesis, may play an essential role to ensure accurate mitotic chromosome condensation in neuron stem cells, ultimately affecting neuron pool and cortex size. The sequence is that of Condensin complex subunit 2 from Homo sapiens (Human).